Reading from the N-terminus, the 405-residue chain is Methylamine dehydrogenase heavy chain (405 aa).

The first 36 residues, 1–36 (MTTFDHPSMIRQPKPTGLAGGLVLAALMLSSSLALA), serve as a signal peptide directing secretion.

It belongs to the aromatic amine dehydrogenase heavy chain family. As to quaternary structure, tetramer of two light and two heavy chains.

It is found in the periplasm. The enzyme catalyses 2 oxidized [amicyanin] + methylamine + H2O = 2 reduced [amicyanin] + formaldehyde + NH4(+) + 2 H(+). Functionally, methylamine dehydrogenase carries out the oxidation of methylamine. Electrons are passed from methylamine dehydrogenase to amicyanin. The sequence is that of Methylamine dehydrogenase heavy chain (mauB) from Methylophilus methylotrophus (Bacterium W3A1).